Reading from the N-terminus, the 431-residue chain is UPF0597 protein BVU_2091 (431 aa).

The protein belongs to the UPF0597 family.

The polypeptide is UPF0597 protein BVU_2091 (Phocaeicola vulgatus (strain ATCC 8482 / DSM 1447 / JCM 5826 / CCUG 4940 / NBRC 14291 / NCTC 11154) (Bacteroides vulgatus)).